Consider the following 163-residue polypeptide: MIKVLVIADTHGQNQRWIELKNYHNPDVIIHAGDHMTTKQFMDQNATFWVAGNNDSIGNEIEIFQLGQINFVLMHGHQAPRDNLKKWYQLLVLKAQQYPCDVLIFGHSHIEYTNKINMIQLINPGSLQLPRNQTNTPSYCTFIVNKDELTDLTIHYYQASKVS.

Mn(2+) contacts are provided by D9, H11, D34, N53, H75, H107, and H109.

It belongs to the metallophosphoesterase superfamily. YfcE family. Requires Mn(2+) as cofactor.

In Mycoplasma genitalium (strain ATCC 33530 / DSM 19775 / NCTC 10195 / G37) (Mycoplasmoides genitalium), this protein is Probable metallophosphoesterase MG207.